A 252-amino-acid chain; its full sequence is uncharacterized protein (252 aa).

Residues Ser195 and Ser209 each carry the phosphoserine modification.

Testis-specific. Highly expressed in spermatocytes (at protein level).

Its function is as follows. Essential for normal spermatogenesis and male fertility. This is an uncharacterized protein from Mus musculus (Mouse).